Reading from the N-terminus, the 349-residue chain is NAC domain-containing protein JA2 (349 aa).

In terms of domain architecture, NAC spans 14 to 163 (LPPGFRFYPT…EWVLCRIYKK (150 aa)). A DNA-binding region spans residues 111–169 (VGIKKALVFYVGKAPKGSKTNWIMHEYRLFESSRKNNGSSKLDEWVLCRIYKKNSSGPK). Residues 169–194 (KPLMSGLHSSNEYSHGSSTSSSSQFD) are disordered. Over residues 177–191 (SSNEYSHGSSTSSSS) the composition is skewed to low complexity.

In terms of tissue distribution, expressed in guard cells of the epidermis.

The protein localises to the nucleus. In terms of biological role, transcription factor involved in abscisic acid-mediated stomatal closure. Regulates the expression of NCED1, a gene involved in the biosynthesis of abscisic acid (ABA). Required for the stomatal closure induced by the bacterial pathogen Pseudomonas syringae pv tomato DC3000, but not for stomatal reopening. The protein is NAC domain-containing protein JA2 of Solanum lycopersicum (Tomato).